The following is a 688-amino-acid chain: DNA ligase (688 aa).

Residues 51–55 (DSEYD), 100–101 (SL), and glutamate 129 contribute to the NAD(+) site. Lysine 131 serves as the catalytic N6-AMP-lysine intermediate. Residues arginine 152, glutamate 189, lysine 308, and lysine 332 each contribute to the NAD(+) site. Cysteine 426, cysteine 429, cysteine 444, and cysteine 450 together coordinate Zn(2+). Positions 609–688 (ADEQPLKGQT…DELLALLANS (80 aa)) constitute a BRCT domain.

It belongs to the NAD-dependent DNA ligase family. LigA subfamily. Mg(2+) is required as a cofactor. The cofactor is Mn(2+).

It carries out the reaction NAD(+) + (deoxyribonucleotide)n-3'-hydroxyl + 5'-phospho-(deoxyribonucleotide)m = (deoxyribonucleotide)n+m + AMP + beta-nicotinamide D-nucleotide.. In terms of biological role, DNA ligase that catalyzes the formation of phosphodiester linkages between 5'-phosphoryl and 3'-hydroxyl groups in double-stranded DNA using NAD as a coenzyme and as the energy source for the reaction. It is essential for DNA replication and repair of damaged DNA. The polypeptide is DNA ligase (Shewanella sp. (strain MR-7)).